Consider the following 294-residue polypeptide: Picrinine-N-methytransferase TMT2 (294 aa).

The interval 75–84 (LLDVGCGLGG) is SAM motif I. The Vacuolar targeting signal signature appears at 137–143 (DGEFDVV). An SAM motif II region spans residues 138-146 (GEFDVVFTL). The segment at 165 to 174 (VGSPGAAIVV) is SAM motif III.

This sequence belongs to the class I-like SAM-binding methyltransferase superfamily. gTMT family. Homodimer.

The protein localises to the vacuole membrane. It carries out the reaction picrinine + S-adenosyl-L-methionine = ervincine + S-adenosyl-L-homocysteine + H(+). Its pathway is alkaloid biosynthesis; vindoline biosynthesis. Its function is as follows. S-adenosyl-L-methionine-dependent N-methyltransferase involved in the biosynthesis of biologically active monoterpenoid indole alkaloids (MIAs) natural products including vindoline. Catalyzes the conversion of picrinine to N-methylpicrinine (ervincine). The chain is Picrinine-N-methytransferase TMT2 from Catharanthus roseus (Madagascar periwinkle).